The primary structure comprises 131 residues: MRRMARKAIHSDQAPKAIGPYSQAVQVDAGKMTFLSGQIPLDPATMEMVQGDVVAQAERVMENLKAVLAASGLDFSHVVRCTIFLTDLGDFARVNEVYGRYFTGAPPARATVQVSALPRGSKVEIDAIAVS.

This sequence belongs to the RutC family.

The chain is Protein DfrA (dfrA) from Myxococcus xanthus.